The following is a 314-amino-acid chain: tRNA uridine(34) hydroxylase (314 aa).

Residues 140–234 (ARDDVILIDT…YLEETPPDES (95 aa)) form the Rhodanese domain. The Cysteine persulfide intermediate role is filled by Cys-194.

Belongs to the TrhO family.

The enzyme catalyses uridine(34) in tRNA + AH2 + O2 = 5-hydroxyuridine(34) in tRNA + A + H2O. Functionally, catalyzes oxygen-dependent 5-hydroxyuridine (ho5U) modification at position 34 in tRNAs. This is tRNA uridine(34) hydroxylase from Acinetobacter baumannii (strain AYE).